Consider the following 359-residue polypeptide: ATPase ASNA1 homolog (359 aa).

23–30 (KGGVGKTT) is a binding site for ATP. Asp-63 is an active-site residue. ATP-binding residues include Glu-252 and Asn-279. Zn(2+)-binding residues include Cys-291 and Cys-294.

It belongs to the arsA ATPase family. In terms of assembly, homodimer.

It localises to the cytoplasm. Its subcellular location is the endoplasmic reticulum. Its function is as follows. ATPase required for the post-translational delivery of tail-anchored (TA) proteins to the endoplasmic reticulum. Recognizes and selectively binds the transmembrane domain of TA proteins in the cytosol. This complex then targets to the endoplasmic reticulum by membrane-bound receptors, where the tail-anchored protein is released for insertion. This process is regulated by ATP binding and hydrolysis. ATP binding drives the homodimer towards the closed dimer state, facilitating recognition of newly synthesized TA membrane proteins. ATP hydrolysis is required for insertion. Subsequently, the homodimer reverts towards the open dimer state, lowering its affinity for the membrane-bound receptor, and returning it to the cytosol to initiate a new round of targeting. In Trypanosoma cruzi (strain CL Brener), this protein is ATPase ASNA1 homolog.